The chain runs to 396 residues: Metallophosphoesterase 1 (396 aa).

The helical transmembrane segment at 28–48 (TVVIISVLLFCEYFIYYLVLF) threads the bilayer. A divalent metal cation is bound by residues Asp-75, Asp-117, Asn-155, His-249, His-303, and His-305. The helical transmembrane segment at 356 to 376 (TVLTMYGAAAGFLMILILVHF) threads the bilayer.

Belongs to the metallophosphoesterase superfamily. MPPE1 family. Interacts with GPI-anchor proteins (via the GPI portion). Interacts with TMED10. The cofactor is Mn(2+).

It is found in the endoplasmic reticulum-Golgi intermediate compartment membrane. Functionally, metallophosphoesterase that catalyzes the removal of a side-chain ethanolamine-phosphate (EtNP) from the second mannose of the GPI-anchor protein intermediate. Participates in the glycan remodeling steps of GPI-anchor maturation to allow an efficient transport of GPI-anchor proteins from the endoplasmic reticulum to the Golgi. This chain is Metallophosphoesterase 1, found in Mus musculus (Mouse).